A 149-amino-acid polypeptide reads, in one-letter code: Transcriptional repressor NrdR (149 aa).

Residues 3–34 fold into a zinc finger; sequence CPFCSATDTKVIDSRLVADGHQVRRRRECAEC. In terms of domain architecture, ATP-cone spans 49–139; it reads PRVVKQDGSR…VYRAFEDVSE (91 aa).

The protein belongs to the NrdR family. The cofactor is Zn(2+).

Negatively regulates transcription of bacterial ribonucleotide reductase nrd genes and operons by binding to NrdR-boxes. The chain is Transcriptional repressor NrdR from Shewanella woodyi (strain ATCC 51908 / MS32).